A 175-amino-acid polypeptide reads, in one-letter code: uncharacterized protein (175 aa).

Residues 1–2 (ME) are Extracellular-facing. Residues 3–23 (SIILSIAIFIGVLLGTSVGAG) traverse the membrane as a helical segment. Over 24–151 (SGSSISPDVD…TGISTTMNAR (128 aa)) the chain is Cytoplasmic. The tract at residues 26 to 88 (SSISPDVDAG…DVGAGSGSSI (63 aa)) is disordered. Residues 59 to 78 (FSGSSTSPDVDAGSGSSTSP) show a composition bias toward polar residues. The chain crosses the membrane as a helical span at residues 152 to 172 (VAVLITAAILSAPVTAIALLE). At 173-175 (ARR) the chain is on the extracellular side.

The protein resides in the membrane. This is an uncharacterized protein from Saccharomyces cerevisiae (strain ATCC 204508 / S288c) (Baker's yeast).